Consider the following 144-residue polypeptide: Large ribosomal subunit protein uL13 (144 aa).

It belongs to the universal ribosomal protein uL13 family. In terms of assembly, part of the 50S ribosomal subunit.

Its function is as follows. This protein is one of the early assembly proteins of the 50S ribosomal subunit, although it is not seen to bind rRNA by itself. It is important during the early stages of 50S assembly. The polypeptide is Large ribosomal subunit protein uL13 (Mycoplasma mobile (strain ATCC 43663 / 163K / NCTC 11711) (Mesomycoplasma mobile)).